Here is a 220-residue protein sequence, read N- to C-terminus: Chloramphenicol acetyltransferase (220 aa).

The Proton acceptor role is filled by His-195.

It belongs to the chloramphenicol acetyltransferase family. Homotrimer.

The catalysed reaction is chloramphenicol + acetyl-CoA = chloramphenicol 3-acetate + CoA. Its function is as follows. This enzyme is an effector of chloramphenicol resistance in bacteria. The sequence is that of Chloramphenicol acetyltransferase (cat) from Streptomyces acrimycini.